The primary structure comprises 105 residues: UPF0145 protein GK1405 (105 aa).

Belongs to the UPF0145 family.

The chain is UPF0145 protein GK1405 from Geobacillus kaustophilus (strain HTA426).